Here is a 189-residue protein sequence, read N- to C-terminus: Elongation factor P (189 aa).

The residue at position 34 (lysine 34) is an N6-(3,6-diaminohexanoyl)-5-hydroxylysine.

This sequence belongs to the elongation factor P family. May be beta-lysylated on the epsilon-amino group of Lys-34 by the combined action of EpmA and EpmB, and then hydroxylated on the C5 position of the same residue by EpmC (if this protein is present). Lysylation is critical for the stimulatory effect of EF-P on peptide-bond formation. The lysylation moiety may extend toward the peptidyltransferase center and stabilize the terminal 3-CCA end of the tRNA. Hydroxylation of the C5 position on Lys-34 may allow additional potential stabilizing hydrogen-bond interactions with the P-tRNA.

The protein resides in the cytoplasm. It participates in protein biosynthesis; polypeptide chain elongation. Involved in peptide bond synthesis. Alleviates ribosome stalling that occurs when 3 or more consecutive Pro residues or the sequence PPG is present in a protein, possibly by augmenting the peptidyl transferase activity of the ribosome. Modification of Lys-34 is required for alleviation. This chain is Elongation factor P, found in Francisella philomiragia subsp. philomiragia (strain ATCC 25017 / CCUG 19701 / FSC 153 / O#319-036).